The primary structure comprises 218 residues: Superoxide dismutase [Mn] 2, mitochondrial (218 aa).

A mitochondrion-targeting transit peptide spans 1 to 24 (MLQSTARTASKLVQPVAGVLAVRS). Residues His50, His98, Asp179, and His183 each contribute to the Mn(2+) site.

This sequence belongs to the iron/manganese superoxide dismutase family. In terms of assembly, homotetramer. Requires Mn(2+) as cofactor. In terms of tissue distribution, expressed in pharynx and rectum. Upon thermal stress, expressed in vulva, body wall muscles and hypodermis.

The protein resides in the mitochondrion. The enzyme catalyses 2 superoxide + 2 H(+) = H2O2 + O2. Destroys superoxide anion radicals which are normally produced within the cells and which are toxic to biological systems. The protein is Superoxide dismutase [Mn] 2, mitochondrial (sod-3) of Caenorhabditis elegans.